The chain runs to 295 residues: UDP-N-acetylenolpyruvoylglucosamine reductase (295 aa).

The FAD-binding PCMH-type domain maps to 24–188 (KVGGNAEIFF…LKAVFKVNKG (165 aa)). Arg-168 is a catalytic residue. Ser-217 functions as the Proton donor in the catalytic mechanism. Glu-287 is an active-site residue.

It belongs to the MurB family. It depends on FAD as a cofactor.

It is found in the cytoplasm. The enzyme catalyses UDP-N-acetyl-alpha-D-muramate + NADP(+) = UDP-N-acetyl-3-O-(1-carboxyvinyl)-alpha-D-glucosamine + NADPH + H(+). The protein operates within cell wall biogenesis; peptidoglycan biosynthesis. Its function is as follows. Cell wall formation. The polypeptide is UDP-N-acetylenolpyruvoylglucosamine reductase (Rickettsia felis (strain ATCC VR-1525 / URRWXCal2) (Rickettsia azadi)).